The primary structure comprises 258 residues: Granzyme K (258 aa).

The first 23 residues, Met-1–His-23, serve as a signal peptide directing secretion. Positions Thr-24–Glu-25 are cleaved as a propeptide — activation peptide. Residues Ile-26 to Ala-253 form the Peptidase S1 domain. A disulfide bridge connects residues Cys-51 and Cys-67. Catalysis depends on charge relay system residues His-66 and Asp-110. 3 cysteine pairs are disulfide-bonded: Cys-143–Cys-214, Cys-175–Cys-193, and Cys-204–Cys-228. Catalysis depends on Ser-208, which acts as the Charge relay system.

The protein belongs to the peptidase S1 family. Granzyme subfamily. Speen, lungs and liver non-parenchymal cells.

It is found in the cytoplasmic granule. The polypeptide is Granzyme K (Gzmk) (Rattus norvegicus (Rat)).